The primary structure comprises 877 residues: Translation initiation factor IF-2 (877 aa).

Residues 48 to 289 are disordered; sequence SSFQNSAPAE…QITKRKERPL (242 aa). The span at 78-89 shows a compositional bias: basic and acidic residues; sequence RKNEKKPEENNT. Over residues 92 to 101 the composition is skewed to basic residues; the sequence is KSNRRRNNKR. Basic and acidic residues predominate over residues 102 to 116; that stretch reads RSSDRARDNKERDAK. Over residues 123 to 132 the composition is skewed to low complexity; sequence KAAALLQQFK. Composition is skewed to basic and acidic residues over residues 135–155 and 162–189; these read QRAE…EYHE and KEQS…EKKV. A compositionally biased stretch (basic residues) spans 277 to 286; it reads PRKQITKRKE. Positions 378-547 constitute a tr-type G domain; sequence KRPPVVTIMG…LLQADVMELK (170 aa). The G1 stretch occupies residues 387–394; the sequence is GHVDHGKT. A GTP-binding site is contributed by 387 to 394; it reads GHVDHGKT. A G2 region spans residues 412-416; it reads GITQR. The segment at 433-436 is G3; sequence DTPG. GTP is bound by residues 433–437 and 487–490; these read DTPGH and NKMD. The segment at 487–490 is G4; it reads NKMD. The tract at residues 523–525 is G5; sequence SAK.

It belongs to the TRAFAC class translation factor GTPase superfamily. Classic translation factor GTPase family. IF-2 subfamily.

It localises to the cytoplasm. One of the essential components for the initiation of protein synthesis. Protects formylmethionyl-tRNA from spontaneous hydrolysis and promotes its binding to the 30S ribosomal subunits. Also involved in the hydrolysis of GTP during the formation of the 70S ribosomal complex. This is Translation initiation factor IF-2 from Lactobacillus acidophilus (strain ATCC 700396 / NCK56 / N2 / NCFM).